The sequence spans 597 residues: K(+) efflux antiporter 6 (597 aa).

An N-terminal signal peptide occupies residues 1–35 (MVEGRRRRRFSLSSQQLALLLLLLSFFLCFSVASP). Helical transmembrane passes span 177–197 (LISD…AFAC), 201–221 (PVIT…LNFI), 224–244 (MVQV…ALGL), 257–277 (VAVL…GITV), 287–307 (GVFV…KFLM), 321–341 (IGIL…LPVL), 351–371 (MLSI…LSIL), 396–416 (LAAV…GLSL), 440–460 (IEPI…MLVN), 461–481 (VHFL…VIII), 499–519 (TALL…VLLS), and 543–563 (LVTT…GILL).

Belongs to the monovalent cation:proton antiporter 2 (CPA2) transporter (TC 2.A.37) family. KEA (TC 2.A.37.1) subfamily. As to expression, expressed in roots, stems, leaves, flowers and silique.

The protein resides in the golgi apparatus membrane. The protein localises to the golgi apparatus. It is found in the trans-Golgi network membrane. It localises to the prevacuolar compartment membrane. Its subcellular location is the endomembrane system. It catalyses the reaction K(+)(in) + H(+)(out) = K(+)(out) + H(+)(in). Its function is as follows. Electroneutral K(+)/H(+) efflux antiporter involved in K(+) homeostasis and osmotic adjustment. Together with KEA4 and KEA5, promotes growth and development, and facilitates endosomal pH and ions homeostasis, as well as salt tolerance (e.g. K(+), NaCl and LiCl), probably by supporting cell wall biosynthesis during rapid etiolated seedling growth. In Arabidopsis thaliana (Mouse-ear cress), this protein is K(+) efflux antiporter 6.